The chain runs to 295 residues: MNNRQSVLMEALPYIRKFHKKTIVIKLGGHAMVDSAIMNSVVQDAVLLHYVGMRVVLVHGGGPEITLKMKALGKEARFVGGLRVTDEETLEIAQMVLAGKIGNMIVSMIAKNGAKGVGISGNDGGLVIAEKTPIRKMMVGDEEVEVDLGFVGDVKEINSNLLETLLDAGYIPVISPLALDRKGNDLNINADTMAGEIAVALKAFKLISLTDVDGVMNKERTEIFHRLTLKNVDALMSDGTISGGMIPKLEASVNAVRHGVEGAHILNGNSEHNLLLELFTNDGVGTMITASMISL.

Substrate contacts are provided by residues 61–62 (GG), Arg-83, and Asn-187.

It belongs to the acetylglutamate kinase family. ArgB subfamily.

Its subcellular location is the cytoplasm. The enzyme catalyses N-acetyl-L-glutamate + ATP = N-acetyl-L-glutamyl 5-phosphate + ADP. The protein operates within amino-acid biosynthesis; L-arginine biosynthesis; N(2)-acetyl-L-ornithine from L-glutamate: step 2/4. Functionally, catalyzes the ATP-dependent phosphorylation of N-acetyl-L-glutamate. The sequence is that of Acetylglutamate kinase from Methanocorpusculum labreanum (strain ATCC 43576 / DSM 4855 / Z).